The chain runs to 643 residues: Melanoma-associated antigen C3 (643 aa).

MAGE domains follow at residues leucine 184–methionine 384 and leucine 456–glutamate 643. The disordered stretch occupies residues asparagine 347–serine 421. Over residues histidine 354–leucine 363 the composition is skewed to basic and acidic residues. Over residues glycine 383–serine 414 the composition is skewed to pro residues. Phosphothreonine is present on residues threonine 478, threonine 484, and threonine 485.

Expressed in testis. Not expressed in other normal tissues, but is expressed in tumors of different histological origins.

This is Melanoma-associated antigen C3 (MAGEC3) from Homo sapiens (Human).